The primary structure comprises 269 residues: Undecaprenyl-diphosphatase (269 aa).

7 helical membrane-spanning segments follow: residues 42-62 (WDTFIVLIQLGAVLGVVALYF), 83-103 (LTVLIGCIPAFAAGLALHGVI), 110-130 (PYLPQVICVSLILGGVILLVV), 142-162 (GMALSLKTAALIGLFQCLSLL), 186-206 (AEFSFFMAIPIMVGAFALDLL), 219-239 (AIAIGFVVSFLSGLVVVKFLI), and 247-267 (FTPFAWWRIVVGVIGLGLIYI).

This sequence belongs to the UppP family.

Its subcellular location is the cell inner membrane. The catalysed reaction is di-trans,octa-cis-undecaprenyl diphosphate + H2O = di-trans,octa-cis-undecaprenyl phosphate + phosphate + H(+). Catalyzes the dephosphorylation of undecaprenyl diphosphate (UPP). Confers resistance to bacitracin. The polypeptide is Undecaprenyl-diphosphatase (Caulobacter sp. (strain K31)).